Consider the following 119-residue polypeptide: Ribonuclease P protein component (119 aa).

This sequence belongs to the RnpA family. As to quaternary structure, consists of a catalytic RNA component (M1 or rnpB) and a protein subunit.

It carries out the reaction Endonucleolytic cleavage of RNA, removing 5'-extranucleotides from tRNA precursor.. In terms of biological role, RNaseP catalyzes the removal of the 5'-leader sequence from pre-tRNA to produce the mature 5'-terminus. It can also cleave other RNA substrates such as 4.5S RNA. The protein component plays an auxiliary but essential role in vivo by binding to the 5'-leader sequence and broadening the substrate specificity of the ribozyme. The sequence is that of Ribonuclease P protein component from Serratia proteamaculans (strain 568).